The chain runs to 196 residues: HTH-type transcriptional regulator BetI (196 aa).

An HTH tetR-type domain is found at 8-68 (EVRRAQLIDA…ATMRHILRDL (61 aa)). The segment at residues 31–50 (TLASVAQRANISTGIVSHYF) is a DNA-binding region (H-T-H motif).

It functions in the pathway amine and polyamine biosynthesis; betaine biosynthesis via choline pathway [regulation]. Functionally, repressor involved in the biosynthesis of the osmoprotectant glycine betaine. It represses transcription of the choline transporter BetT and the genes of BetAB involved in the synthesis of glycine betaine. This chain is HTH-type transcriptional regulator BetI, found in Paraburkholderia phymatum (strain DSM 17167 / CIP 108236 / LMG 21445 / STM815) (Burkholderia phymatum).